Reading from the N-terminus, the 434-residue chain is Glutamyl-tRNA reductase (434 aa).

Substrate-binding positions include 52-55 (TCNR), Ser-115, 120-122 (ETQ), and Gln-126. Cys-53 serves as the catalytic Nucleophile. Residue 195–200 (GAGEMI) coordinates NADP(+).

This sequence belongs to the glutamyl-tRNA reductase family. As to quaternary structure, homodimer.

The enzyme catalyses (S)-4-amino-5-oxopentanoate + tRNA(Glu) + NADP(+) = L-glutamyl-tRNA(Glu) + NADPH + H(+). It functions in the pathway porphyrin-containing compound metabolism; protoporphyrin-IX biosynthesis; 5-aminolevulinate from L-glutamyl-tRNA(Glu): step 1/2. Catalyzes the NADPH-dependent reduction of glutamyl-tRNA(Glu) to glutamate 1-semialdehyde (GSA). The polypeptide is Glutamyl-tRNA reductase (Cupriavidus pinatubonensis (strain JMP 134 / LMG 1197) (Cupriavidus necator (strain JMP 134))).